A 433-amino-acid chain; its full sequence is Tol-Pal system protein TolB (433 aa).

An N-terminal signal peptide occupies residues 1-21; that stretch reads MIKRLRGLLVMLCCVAGMAVA.

It belongs to the TolB family. In terms of assembly, the Tol-Pal system is composed of five core proteins: the inner membrane proteins TolA, TolQ and TolR, the periplasmic protein TolB and the outer membrane protein Pal. They form a network linking the inner and outer membranes and the peptidoglycan layer.

The protein localises to the periplasm. Part of the Tol-Pal system, which plays a role in outer membrane invagination during cell division and is important for maintaining outer membrane integrity. The protein is Tol-Pal system protein TolB of Pseudomonas putida (strain ATCC 47054 / DSM 6125 / CFBP 8728 / NCIMB 11950 / KT2440).